The following is a 262-amino-acid chain: Ornithine carbamoyltransferase (262 aa).

Residues 3–7 (STRTR), glutamine 30, arginine 54, and 81–84 (HPTQ) each bind carbamoyl phosphate. L-ornithine is bound by residues asparagine 114, aspartate 178, and 182–183 (SM). Carbamoyl phosphate is bound by residues 219-222 (HCLP) and threonine 247.

The protein belongs to the aspartate/ornithine carbamoyltransferase superfamily. OTCase family.

The protein resides in the cytoplasm. The enzyme catalyses carbamoyl phosphate + L-ornithine = L-citrulline + phosphate + H(+). It participates in amino-acid biosynthesis; L-arginine biosynthesis; L-arginine from L-ornithine and carbamoyl phosphate: step 1/3. The polypeptide is Ornithine carbamoyltransferase (argF) (Neisseria cinerea).